Reading from the N-terminus, the 988-residue chain is Echinoderm microtubule-associated protein-like 4 (988 aa).

Residue Met1 is modified to N-acetylmethionine. Positions 1–260 (MDGFAGSLDD…IPSDVDNYDD (260 aa)) are microtubule-binding. Phosphoserine occurs at positions 7, 13, 16, 61, and 79. The stretch at 14–63 (AASTSDVQDRLSALESRVQQQEDEITVLKAALADVLRRLAISEDHVASVK) forms a coiled coil. Thr96 is subject to Phosphothreonine. Residues 106-194 (TLSSAAKSGT…WENSDDSRNK (89 aa)) are disordered. Over residues 114-134 (GTEKKKEKPQGQREKKEDSHS) the composition is skewed to basic and acidic residues. The residue at position 134 (Ser134) is a Phosphoserine; by NEK7. The segment covering 137–155 (QSPQIRASPSPQPSSQPLQ) has biased composition (low complexity). Residue Ser144 is modified to Phosphoserine; by NEK6. A Phosphoserine; by NEK7 modification is found at Ser146. The span at 156–168 (INRQTPESKSSAP) shows a compositional bias: polar residues. Phosphoserine is present on Ser171. Positions 176–193 (PTAEKSHNSWENSDDSRN) are enriched in basic and acidic residues. At Ser200 the chain carries Phosphoserine. Thr201 is modified (phosphothreonine). Tyr237 is modified (phosphotyrosine). The residue at position 248 (Thr248) is a Phosphothreonine. WD repeat units follow at residues 270–308 (LKLE…LFNY), 312–359 (TQRH…VWDS), 367–407 (VIGL…VWDW), 414–449 (AEIK…FWTW), 456–495 (RKQG…IWSK), 511–549 (QINR…LWDH), 554–590 (EREI…LRGT), 593–632 (DGFQ…MWNS), 636–673 (RLEW…VLDA), 679–715 (VSIH…LYTV), 722–761 (YSRY…YWDI), 771–829 (RSDC…LFQY), and 836–875 (APSH…QWKL). Thr620 carries the phosphothreonine; by NEK6 and NEK7 modification. Residues 887 to 988 (ITDASVTKTP…EEERGITPLC (102 aa)) form a disordered region. Over residues 890–904 (ASVTKTPASSSETAR) the composition is skewed to polar residues. Phosphoserine occurs at positions 906, 908, and 914. The segment covering 927–939 (MGSSPTLVENSLE) has biased composition (polar residues). Acidic residues predominate over residues 944-953 (PSEEQSEWGS).

The protein belongs to the WD repeat EMAP family. In terms of assembly, homotrimer; self-association is mediated by the N-terminal coiled coil. Interacts (via WD repeats) with NUDC. Interacts with alpha- and beta-tubulin during mitosis. Phosphorylated during mitosis. Phosphorylation at Ser-144 and Ser-146 promotes its dissociation from microtubules during mitosis which is required for efficient chromosome congression.

Its subcellular location is the cytoplasm. It localises to the cytoskeleton. The protein localises to the spindle. It is found in the microtubule organizing center. The protein resides in the midbody. Its function is as follows. Essential for the stability of microtubules (MTs). Essential for the formation of MTs. Required for the organization of the mitotic spindle and for the proper attachment of kinetochores to MTs. Promotes the recruitment of NUDC to the mitotic spindle for mitotic progression. In Mus musculus (Mouse), this protein is Echinoderm microtubule-associated protein-like 4 (Eml4).